The following is a 385-amino-acid chain: Methylthioribose-1-phosphate isomerase (385 aa).

D255 serves as the catalytic Proton donor.

Belongs to the eIF-2B alpha/beta/delta subunits family. MtnA subfamily.

The protein localises to the cytoplasm. The protein resides in the nucleus. It carries out the reaction 5-(methylsulfanyl)-alpha-D-ribose 1-phosphate = 5-(methylsulfanyl)-D-ribulose 1-phosphate. Its pathway is amino-acid biosynthesis; L-methionine biosynthesis via salvage pathway; L-methionine from S-methyl-5-thio-alpha-D-ribose 1-phosphate: step 1/6. In terms of biological role, catalyzes the interconversion of methylthioribose-1-phosphate (MTR-1-P) into methylthioribulose-1-phosphate (MTRu-1-P). The protein is Methylthioribose-1-phosphate isomerase (mri1) of Aspergillus clavatus (strain ATCC 1007 / CBS 513.65 / DSM 816 / NCTC 3887 / NRRL 1 / QM 1276 / 107).